Here is a 439-residue protein sequence, read N- to C-terminus: tRNA modification GTPase MnmE (439 aa).

Residues arginine 24, glutamate 81, and lysine 121 each coordinate (6S)-5-formyl-5,6,7,8-tetrahydrofolate. In terms of domain architecture, TrmE-type G spans glycine 218 to glutamate 363. Position 228 (asparagine 228) interacts with K(+). GTP is bound by residues asparagine 228 to serine 233, threonine 247 to threonine 253, and aspartate 272 to glycine 275. Serine 232 provides a ligand contact to Mg(2+). Residues threonine 247, isoleucine 249, and threonine 252 each coordinate K(+). Threonine 253 serves as a coordination point for Mg(2+). (6S)-5-formyl-5,6,7,8-tetrahydrofolate is bound at residue lysine 439.

This sequence belongs to the TRAFAC class TrmE-Era-EngA-EngB-Septin-like GTPase superfamily. TrmE GTPase family. In terms of assembly, homodimer. Heterotetramer of two MnmE and two MnmG subunits. K(+) serves as cofactor.

The protein resides in the cytoplasm. Its function is as follows. Exhibits a very high intrinsic GTPase hydrolysis rate. Involved in the addition of a carboxymethylaminomethyl (cmnm) group at the wobble position (U34) of certain tRNAs, forming tRNA-cmnm(5)s(2)U34. This Rhizobium johnstonii (strain DSM 114642 / LMG 32736 / 3841) (Rhizobium leguminosarum bv. viciae) protein is tRNA modification GTPase MnmE.